Here is a 68-residue protein sequence, read N- to C-terminus: MKTTELRQKDVAGLQAEVKELQKAHFGLRMQKATQQLNNTATLRSTRRDIARAKTILVEKQSAETSAK.

Belongs to the universal ribosomal protein uL29 family.

This chain is Large ribosomal subunit protein uL29, found in Albidiferax ferrireducens (strain ATCC BAA-621 / DSM 15236 / T118) (Rhodoferax ferrireducens).